We begin with the raw amino-acid sequence, 1102 residues long: Carbamoyl phosphate synthase large chain (1102 aa).

Residues Met-1–Glu-408 are carboxyphosphate synthetic domain. Arg-129, Arg-175, Gly-181, Gly-182, Glu-214, Ile-216, Glu-221, Gly-247, Val-248, His-249, Gln-291, and Glu-305 together coordinate ATP. The region spanning Ala-138–Val-334 is the ATP-grasp 1 domain. Mg(2+) contacts are provided by Gln-291, Glu-305, and Asn-307. Mn(2+) is bound by residues Gln-291, Glu-305, and Asn-307. An oligomerization domain region spans residues Lys-409–Ser-551. A carbamoyl phosphate synthetic domain region spans residues Glu-552 to Tyr-954. In terms of domain architecture, ATP-grasp 2 spans Gly-682 to Leu-873. The ATP site is built by Arg-718, Arg-757, Leu-759, Glu-764, Gly-789, Ile-790, His-791, Ser-792, Gln-832, and Glu-844. The Mg(2+) site is built by Gln-832, Glu-844, and Asn-846. Mn(2+) contacts are provided by Gln-832, Glu-844, and Asn-846. The region spanning Gly-955–Ala-1100 is the MGS-like domain. The tract at residues Gly-955–Asp-1102 is allosteric domain.

The protein belongs to the CarB family. In terms of assembly, composed of two chains; the small (or glutamine) chain promotes the hydrolysis of glutamine to ammonia, which is used by the large (or ammonia) chain to synthesize carbamoyl phosphate. Tetramer of heterodimers (alpha,beta)4. It depends on Mg(2+) as a cofactor. Mn(2+) serves as cofactor.

It catalyses the reaction hydrogencarbonate + L-glutamine + 2 ATP + H2O = carbamoyl phosphate + L-glutamate + 2 ADP + phosphate + 2 H(+). The catalysed reaction is hydrogencarbonate + NH4(+) + 2 ATP = carbamoyl phosphate + 2 ADP + phosphate + 2 H(+). It participates in amino-acid biosynthesis; L-arginine biosynthesis; carbamoyl phosphate from bicarbonate: step 1/1. The protein operates within pyrimidine metabolism; UMP biosynthesis via de novo pathway; (S)-dihydroorotate from bicarbonate: step 1/3. In terms of biological role, large subunit of the glutamine-dependent carbamoyl phosphate synthetase (CPSase). CPSase catalyzes the formation of carbamoyl phosphate from the ammonia moiety of glutamine, carbonate, and phosphate donated by ATP, constituting the first step of 2 biosynthetic pathways, one leading to arginine and/or urea and the other to pyrimidine nucleotides. The large subunit (synthetase) binds the substrates ammonia (free or transferred from glutamine from the small subunit), hydrogencarbonate and ATP and carries out an ATP-coupled ligase reaction, activating hydrogencarbonate by forming carboxy phosphate which reacts with ammonia to form carbamoyl phosphate. This Streptomyces avermitilis (strain ATCC 31267 / DSM 46492 / JCM 5070 / NBRC 14893 / NCIMB 12804 / NRRL 8165 / MA-4680) protein is Carbamoyl phosphate synthase large chain.